The sequence spans 923 residues: Meiotic recombination protein rec11 (923 aa).

The region spanning 278–365 is the SCD domain; sequence LFSRIHDIRA…DRFSLRIVEI (88 aa).

In Schizosaccharomyces pombe (strain 972 / ATCC 24843) (Fission yeast), this protein is Meiotic recombination protein rec11 (rec11).